The primary structure comprises 259 residues: Protein POLYCHOME (259 aa).

A disordered region spans residues 236–259 (KMKSTPSAKRAEREKRVRTLMSMR).

As to quaternary structure, interacts with APC/C activators such as APC5, FZR2, FZR3, CDC20.1 and CDC20.5. Expressed mainly in actively dividing cells (e.g. central cylinder of the root tip, young leaves and vascular tissues).

Its subcellular location is the nucleus. Negative regulator of the anaphase-promoting complex/cyclosome (APC/C) ubiquitin ligase required for proper mitotic progression and cell fate determination; inhibits premature cell differentiation. Prevents DNA endoreplication by promoting the maintenance of the mitotic state by preferentially inhibiting APC/C(FZR) and triggering cyclins accumulation (e.g. CYCB1-1, CYCB1-2 and CYCA2-3) in a temporal manner. Required for megagametophyte and endosperm development. Counteracts the activity of CCS52A1 thus inhibiting the turnover of CYCA2-3. Confers immunity to bacterial pathogens (e.g. Pseudomonas syringae pv. tomato DC3000), which is associated with increased expression of disease resistance (R) genes. The sequence is that of Protein POLYCHOME (PYM) from Arabidopsis thaliana (Mouse-ear cress).